A 300-amino-acid chain; its full sequence is Acetyl-coenzyme A carboxylase carboxyl transferase subunit beta (300 aa).

One can recognise a CoA carboxyltransferase N-terminal domain in the interval 24-293; it reads LWTNCESCSQ…NAPGAALGGA (270 aa). Zn(2+) is bound by residues cysteine 28, cysteine 31, cysteine 47, and cysteine 50. A C4-type zinc finger spans residues 28 to 50; sequence CESCSQMILVKDLQKAMNVCPHC.

It belongs to the AccD/PCCB family. Acetyl-CoA carboxylase is a heterohexamer composed of biotin carboxyl carrier protein (AccB), biotin carboxylase (AccC) and two subunits each of ACCase subunit alpha (AccA) and ACCase subunit beta (AccD). Requires Zn(2+) as cofactor.

Its subcellular location is the cytoplasm. The enzyme catalyses N(6)-carboxybiotinyl-L-lysyl-[protein] + acetyl-CoA = N(6)-biotinyl-L-lysyl-[protein] + malonyl-CoA. Its pathway is lipid metabolism; malonyl-CoA biosynthesis; malonyl-CoA from acetyl-CoA: step 1/1. Component of the acetyl coenzyme A carboxylase (ACC) complex. Biotin carboxylase (BC) catalyzes the carboxylation of biotin on its carrier protein (BCCP) and then the CO(2) group is transferred by the transcarboxylase to acetyl-CoA to form malonyl-CoA. The protein is Acetyl-coenzyme A carboxylase carboxyl transferase subunit beta of Gluconacetobacter diazotrophicus (strain ATCC 49037 / DSM 5601 / CCUG 37298 / CIP 103539 / LMG 7603 / PAl5).